Consider the following 245-residue polypeptide: 3-deoxy-manno-octulosonate cytidylyltransferase (245 aa).

This sequence belongs to the KdsB family.

It is found in the cytoplasm. It catalyses the reaction 3-deoxy-alpha-D-manno-oct-2-ulosonate + CTP = CMP-3-deoxy-beta-D-manno-octulosonate + diphosphate. It functions in the pathway nucleotide-sugar biosynthesis; CMP-3-deoxy-D-manno-octulosonate biosynthesis; CMP-3-deoxy-D-manno-octulosonate from 3-deoxy-D-manno-octulosonate and CTP: step 1/1. Its pathway is bacterial outer membrane biogenesis; lipopolysaccharide biosynthesis. Functionally, activates KDO (a required 8-carbon sugar) for incorporation into bacterial lipopolysaccharide in Gram-negative bacteria. The polypeptide is 3-deoxy-manno-octulosonate cytidylyltransferase (Rhodopseudomonas palustris (strain ATCC BAA-98 / CGA009)).